Consider the following 126-residue polypeptide: Small ribosomal subunit protein uS13 (126 aa).

A disordered region spans residues Gly-95 to Lys-126. A compositionally biased stretch (basic residues) spans Arg-108 to Lys-126.

It belongs to the universal ribosomal protein uS13 family. In terms of assembly, part of the 30S ribosomal subunit. Forms a loose heterodimer with protein S19. Forms two bridges to the 50S subunit in the 70S ribosome.

Located at the top of the head of the 30S subunit, it contacts several helices of the 16S rRNA. In the 70S ribosome it contacts the 23S rRNA (bridge B1a) and protein L5 of the 50S subunit (bridge B1b), connecting the 2 subunits; these bridges are implicated in subunit movement. Contacts the tRNAs in the A and P-sites. The sequence is that of Small ribosomal subunit protein uS13 from Thermobifida fusca (strain YX).